A 479-amino-acid polypeptide reads, in one-letter code: ATP synthase subunit beta (479 aa).

Residue 168–175 coordinates ATP; it reads GGAGVGKT.

Belongs to the ATPase alpha/beta chains family. F-type ATPases have 2 components, CF(1) - the catalytic core - and CF(0) - the membrane proton channel. CF(1) has five subunits: alpha(3), beta(3), gamma(1), delta(1), epsilon(1). CF(0) has three main subunits: a(1), b(2) and c(9-12). The alpha and beta chains form an alternating ring which encloses part of the gamma chain. CF(1) is attached to CF(0) by a central stalk formed by the gamma and epsilon chains, while a peripheral stalk is formed by the delta and b chains.

It is found in the cell membrane. The enzyme catalyses ATP + H2O + 4 H(+)(in) = ADP + phosphate + 5 H(+)(out). In terms of biological role, produces ATP from ADP in the presence of a proton gradient across the membrane. The catalytic sites are hosted primarily by the beta subunits. The chain is ATP synthase subunit beta from Parafrankia sp. (strain EAN1pec).